The chain runs to 582 residues: Putative BTB/POZ domain-containing protein At3g08660 (582 aa).

Residues 1–21 form a disordered region; sequence MGSDSTLSLPSSSPPCNNRSS. The BTB domain occupies 36–103; it reads GDIIVVVDGE…CYGINFDITA (68 aa). Residues 196-466 form the NPH3 domain; it reads EMWTEELSAL…VRVLYTEQLR (271 aa). Residue Y407 is modified to Phosphotyrosine. Residues 558 to 582 form a disordered region; it reads GGETRQKVNRKSRSVSERKSSRSGR. The segment covering 571–582 has biased composition (basic and acidic residues); that stretch reads SVSERKSSRSGR.

It belongs to the NPH3 family.

The protein operates within protein modification; protein ubiquitination. In terms of biological role, may act as a substrate-specific adapter of an E3 ubiquitin-protein ligase complex (CUL3-RBX1-BTB) which mediates the ubiquitination and subsequent proteasomal degradation of target proteins. The polypeptide is Putative BTB/POZ domain-containing protein At3g08660 (Arabidopsis thaliana (Mouse-ear cress)).